Consider the following 366-residue polypeptide: Glucose 1-dehydrogenase 2 (366 aa).

C39 contacts Zn(2+). S41 provides a ligand contact to substrate. H66 and E67 together coordinate Zn(2+). Substrate is bound by residues N90, E116, Q152, and D156. Q152 provides a ligand contact to Zn(2+). Residues 212–214 (NRR), 277–279 (FGF), 305–307 (LIN), and K354 each bind NADP(+). N307 lines the substrate pocket.

This sequence belongs to the zinc-containing alcohol dehydrogenase family. Glucose 1-dehydrogenase subfamily. Requires Zn(2+) as cofactor.

It carries out the reaction D-glucose + NAD(+) = D-glucono-1,5-lactone + NADH + H(+). The enzyme catalyses D-glucose + NADP(+) = D-glucono-1,5-lactone + NADPH + H(+). In terms of biological role, catalyzes the NAD(P)(+)-dependent oxidation of D-glucose to D-gluconate via gluconolactone. Can utilize both NAD(+) and NADP(+) as electron acceptor. Is involved in the degradation of glucose through a non-phosphorylative variant of the Entner-Doudoroff pathway. The polypeptide is Glucose 1-dehydrogenase 2 (Caldivirga maquilingensis (strain ATCC 700844 / DSM 13496 / JCM 10307 / IC-167)).